Reading from the N-terminus, the 297-residue chain is Large ribosomal subunit protein uL18 (297 aa).

It belongs to the universal ribosomal protein uL18 family. In terms of assembly, component of the large ribosomal subunit (LSU).

The protein localises to the cytoplasm. It localises to the nucleus. Functionally, component of the ribosome, a large ribonucleoprotein complex responsible for the synthesis of proteins in the cell. The small ribosomal subunit (SSU) binds messenger RNAs (mRNAs) and translates the encoded message by selecting cognate aminoacyl-transfer RNA (tRNA) molecules. The large subunit (LSU) contains the ribosomal catalytic site termed the peptidyl transferase center (PTC), which catalyzes the formation of peptide bonds, thereby polymerizing the amino acids delivered by tRNAs into a polypeptide chain. The nascent polypeptides leave the ribosome through a tunnel in the LSU and interact with protein factors that function in enzymatic processing, targeting, and the membrane insertion of nascent chains at the exit of the ribosomal tunnel. The protein is Large ribosomal subunit protein uL18 (RpL5) of Aedes aegypti (Yellowfever mosquito).